The primary structure comprises 423 residues: Phosphoribosylamine--glycine ligase (423 aa).

Residues 107–314 form the ATP-grasp domain; the sequence is KAFMAKYNIP…LSDLVEAAID (208 aa). 133 to 194 contacts ATP; sequence VNQKGAPIVI…EDFLQGEEAS (62 aa). Residues E284 and N286 each coordinate Mg(2+).

Belongs to the GARS family. Requires Mg(2+) as cofactor. Mn(2+) serves as cofactor.

It carries out the reaction 5-phospho-beta-D-ribosylamine + glycine + ATP = N(1)-(5-phospho-beta-D-ribosyl)glycinamide + ADP + phosphate + H(+). It participates in purine metabolism; IMP biosynthesis via de novo pathway; N(1)-(5-phospho-D-ribosyl)glycinamide from 5-phospho-alpha-D-ribose 1-diphosphate: step 2/2. The polypeptide is Phosphoribosylamine--glycine ligase (Neisseria meningitidis serogroup A / serotype 4A (strain DSM 15465 / Z2491)).